Here is a 599-residue protein sequence, read N- to C-terminus: Elongation factor 4 (599 aa).

A tr-type G domain is found at Glu4–Glu186. GTP contacts are provided by residues Asp16–Thr21 and Asn133–Asp136.

It belongs to the TRAFAC class translation factor GTPase superfamily. Classic translation factor GTPase family. LepA subfamily.

The protein localises to the cell inner membrane. It carries out the reaction GTP + H2O = GDP + phosphate + H(+). Its function is as follows. Required for accurate and efficient protein synthesis under certain stress conditions. May act as a fidelity factor of the translation reaction, by catalyzing a one-codon backward translocation of tRNAs on improperly translocated ribosomes. Back-translocation proceeds from a post-translocation (POST) complex to a pre-translocation (PRE) complex, thus giving elongation factor G a second chance to translocate the tRNAs correctly. Binds to ribosomes in a GTP-dependent manner. The protein is Elongation factor 4 of Geobacter metallireducens (strain ATCC 53774 / DSM 7210 / GS-15).